Here is a 399-residue protein sequence, read N- to C-terminus: Probable inactive 2-oxoglutarate-dependent dioxygenase AOP2 (399 aa).

The Fe2OG dioxygenase domain maps to 248-345; sequence GGDDVEANDD…RYTAAIFTCP (98 aa). Positions 268, 270, and 325 each coordinate Fe cation. Arg336 lines the 2-oxoglutarate pocket.

The protein belongs to the iron/ascorbate-dependent oxidoreductase family. It depends on Fe(2+) as a cofactor.

The polypeptide is Probable inactive 2-oxoglutarate-dependent dioxygenase AOP2 (AOP2) (Arabidopsis thaliana (Mouse-ear cress)).